The primary structure comprises 440 residues: Proton extrusion protein PxcA (440 aa).

A run of 4 helical transmembrane segments spans residues 222 to 242, 316 to 336, 352 to 374, and 400 to 420; these read FVLT…TFFL, NAIA…LVLV, IVYG…MFVG, and FNFL…KYWI.

It belongs to the CemA family.

The protein resides in the cell inner membrane. In terms of biological role, required for H(+) efflux immediately after light irradiation to form a rapid H(+) concentration gradient across the thylakoid membranes. Together with PxcL, contributes to transient H(+) uptake following dark to light transition. Involved in light-induced Na(+)-dependent proton extrusion. Also seems to be involved in CO(2) transport. This chain is Proton extrusion protein PxcA, found in Synechocystis sp. (strain ATCC 27184 / PCC 6803 / Kazusa).